Consider the following 729-residue polypeptide: Fatty acid oxidation complex subunit alpha (729 aa).

An enoyl-CoA hydratase/isomerase region spans residues 1–189; it reads MLYKGDTLYL…KIGLVDGVVK (189 aa). Asp-296 is a substrate binding site. Residues 311 to 729 are 3-hydroxyacyl-CoA dehydrogenase; sequence ETPKQAAVLG…ARPVGSLKTA (419 aa). NAD(+) is bound by residues Met-324, Asp-343, 400-402, Lys-407, and Ser-429; that span reads VVE. His-450 serves as the catalytic For 3-hydroxyacyl-CoA dehydrogenase activity. NAD(+) is bound at residue Asn-453. Residues Asn-500 and Tyr-660 each coordinate substrate. A disordered region spans residues 708–729; it reads RHNEPYYPPVEPARPVGSLKTA.

It in the N-terminal section; belongs to the enoyl-CoA hydratase/isomerase family. In the C-terminal section; belongs to the 3-hydroxyacyl-CoA dehydrogenase family. In terms of assembly, heterotetramer of two alpha chains (FadB) and two beta chains (FadA).

The catalysed reaction is a (3S)-3-hydroxyacyl-CoA + NAD(+) = a 3-oxoacyl-CoA + NADH + H(+). It catalyses the reaction a (3S)-3-hydroxyacyl-CoA = a (2E)-enoyl-CoA + H2O. It carries out the reaction a 4-saturated-(3S)-3-hydroxyacyl-CoA = a (3E)-enoyl-CoA + H2O. The enzyme catalyses (3S)-3-hydroxybutanoyl-CoA = (3R)-3-hydroxybutanoyl-CoA. The catalysed reaction is a (3Z)-enoyl-CoA = a 4-saturated (2E)-enoyl-CoA. It catalyses the reaction a (3E)-enoyl-CoA = a 4-saturated (2E)-enoyl-CoA. It functions in the pathway lipid metabolism; fatty acid beta-oxidation. Functionally, involved in the aerobic and anaerobic degradation of long-chain fatty acids via beta-oxidation cycle. Catalyzes the formation of 3-oxoacyl-CoA from enoyl-CoA via L-3-hydroxyacyl-CoA. It can also use D-3-hydroxyacyl-CoA and cis-3-enoyl-CoA as substrate. This chain is Fatty acid oxidation complex subunit alpha, found in Salmonella gallinarum (strain 287/91 / NCTC 13346).